A 362-amino-acid chain; its full sequence is 3-dehydroquinate synthase (362 aa).

NAD(+)-binding positions include 70 to 75, 104 to 108, 128 to 129, lysine 141, lysine 150, and 168 to 171; these read DGEKYK, GVIGD, TT, and TLNT. Residues glutamate 183, histidine 246, and histidine 263 each contribute to the Zn(2+) site.

It belongs to the sugar phosphate cyclases superfamily. Dehydroquinate synthase family. It depends on Co(2+) as a cofactor. The cofactor is Zn(2+). NAD(+) serves as cofactor.

Its subcellular location is the cytoplasm. The enzyme catalyses 7-phospho-2-dehydro-3-deoxy-D-arabino-heptonate = 3-dehydroquinate + phosphate. The protein operates within metabolic intermediate biosynthesis; chorismate biosynthesis; chorismate from D-erythrose 4-phosphate and phosphoenolpyruvate: step 2/7. Its function is as follows. Catalyzes the conversion of 3-deoxy-D-arabino-heptulosonate 7-phosphate (DAHP) to dehydroquinate (DHQ). This Haemophilus influenzae (strain 86-028NP) protein is 3-dehydroquinate synthase.